A 463-amino-acid chain; its full sequence is tRNA modification GTPase MnmE (463 aa).

The (6S)-5-formyl-5,6,7,8-tetrahydrofolate site is built by R27, E92, and K131. In terms of domain architecture, TrmE-type G spans 234–386; that stretch reads GIKLAIVGKP…LEDHLLKIYS (153 aa). Residue N244 participates in K(+) binding. GTP contacts are provided by residues 244–249, 263–269, and 288–291; these read NVGKSS, TNVAGTT, and DTAG. A Mg(2+)-binding site is contributed by S248. T263, V265, and T268 together coordinate K(+). Residue T269 participates in Mg(2+) binding. K463 provides a ligand contact to (6S)-5-formyl-5,6,7,8-tetrahydrofolate.

It belongs to the TRAFAC class TrmE-Era-EngA-EngB-Septin-like GTPase superfamily. TrmE GTPase family. As to quaternary structure, homodimer. Heterotetramer of two MnmE and two MnmG subunits. K(+) is required as a cofactor.

The protein localises to the cytoplasm. Exhibits a very high intrinsic GTPase hydrolysis rate. Involved in the addition of a carboxymethylaminomethyl (cmnm) group at the wobble position (U34) of certain tRNAs, forming tRNA-cmnm(5)s(2)U34. This Mycoplasmopsis synoviae (strain 53) (Mycoplasma synoviae) protein is tRNA modification GTPase MnmE.